We begin with the raw amino-acid sequence, 128 residues long: Small ribosomal subunit protein uS9c (128 aa).

Residues serine 106–arginine 128 are disordered. Positions lysine 109 to arginine 128 are enriched in basic residues.

It belongs to the universal ribosomal protein uS9 family.

The protein resides in the plastid. It localises to the chloroplast. This chain is Small ribosomal subunit protein uS9c (rps9), found in Cyanidium caldarium (Red alga).